The chain runs to 203 residues: Large ribosomal subunit protein bL25 (203 aa).

The protein belongs to the bacterial ribosomal protein bL25 family. CTC subfamily. In terms of assembly, part of the 50S ribosomal subunit; part of the 5S rRNA/L5/L18/L25 subcomplex. Contacts the 5S rRNA. Binds to the 5S rRNA independently of L5 and L18.

In terms of biological role, this is one of the proteins that binds to the 5S RNA in the ribosome where it forms part of the central protuberance. This chain is Large ribosomal subunit protein bL25, found in Cupriavidus pinatubonensis (strain JMP 134 / LMG 1197) (Cupriavidus necator (strain JMP 134)).